Here is a 428-residue protein sequence, read N- to C-terminus: Light-independent protochlorophyllide reductase subunit N (428 aa).

3 residues coordinate [4Fe-4S] cluster: cysteine 16, cysteine 41, and cysteine 102.

This sequence belongs to the BchN/ChlN family. Protochlorophyllide reductase is composed of three subunits; ChlL, ChlN and ChlB. Forms a heterotetramer of two ChlB and two ChlN subunits. Requires [4Fe-4S] cluster as cofactor.

The catalysed reaction is chlorophyllide a + oxidized 2[4Fe-4S]-[ferredoxin] + 2 ADP + 2 phosphate = protochlorophyllide a + reduced 2[4Fe-4S]-[ferredoxin] + 2 ATP + 2 H2O. The protein operates within porphyrin-containing compound metabolism; chlorophyll biosynthesis (light-independent). Its function is as follows. Component of the dark-operative protochlorophyllide reductase (DPOR) that uses Mg-ATP and reduced ferredoxin to reduce ring D of protochlorophyllide (Pchlide) to form chlorophyllide a (Chlide). This reaction is light-independent. The NB-protein (ChlN-ChlB) is the catalytic component of the complex. The protein is Light-independent protochlorophyllide reductase subunit N of Synechococcus sp. (strain CC9311).